The sequence spans 157 residues: Crossover junction endodeoxyribonuclease RuvC (157 aa).

Residues D7, E67, and D139 contribute to the active site. Residues D7, E67, and D139 each contribute to the Mg(2+) site.

This sequence belongs to the RuvC family. Homodimer which binds Holliday junction (HJ) DNA. The HJ becomes 2-fold symmetrical on binding to RuvC with unstacked arms; it has a different conformation from HJ DNA in complex with RuvA. In the full resolvosome a probable DNA-RuvA(4)-RuvB(12)-RuvC(2) complex forms which resolves the HJ. The cofactor is Mg(2+).

It localises to the cytoplasm. It carries out the reaction Endonucleolytic cleavage at a junction such as a reciprocal single-stranded crossover between two homologous DNA duplexes (Holliday junction).. Its function is as follows. The RuvA-RuvB-RuvC complex processes Holliday junction (HJ) DNA during genetic recombination and DNA repair. Endonuclease that resolves HJ intermediates. Cleaves cruciform DNA by making single-stranded nicks across the HJ at symmetrical positions within the homologous arms, yielding a 5'-phosphate and a 3'-hydroxyl group; requires a central core of homology in the junction. The consensus cleavage sequence is 5'-(A/T)TT(C/G)-3'. Cleavage occurs on the 3'-side of the TT dinucleotide at the point of strand exchange. HJ branch migration catalyzed by RuvA-RuvB allows RuvC to scan DNA until it finds its consensus sequence, where it cleaves and resolves the cruciform DNA. In Prochlorococcus marinus (strain AS9601), this protein is Crossover junction endodeoxyribonuclease RuvC.